Reading from the N-terminus, the 77-residue chain is UPF0346 protein lin1971 (77 aa).

This sequence belongs to the UPF0346 family.

The chain is UPF0346 protein lin1971 from Listeria innocua serovar 6a (strain ATCC BAA-680 / CLIP 11262).